We begin with the raw amino-acid sequence, 131 residues long: Hydrogenase maturation factor HypA (131 aa).

His2 serves as a coordination point for Ni(2+). Residues Cys74, Cys77, Cys91, and Cys94 each coordinate Zn(2+).

This sequence belongs to the HypA/HybF family.

Involved in the maturation of [NiFe] hydrogenases. Required for nickel insertion into the metal center of the hydrogenase. This chain is Hydrogenase maturation factor HypA, found in Streptomyces avermitilis (strain ATCC 31267 / DSM 46492 / JCM 5070 / NBRC 14893 / NCIMB 12804 / NRRL 8165 / MA-4680).